The following is a 110-amino-acid chain: Acid stress chaperone HdeA (110 aa).

The signal sequence occupies residues 1–21 (MKKVLGVILGGLLLLPVVSNA). Cys-39 and Cys-87 are oxidised to a cystine.

It belongs to the HdeA family.

The protein localises to the periplasm. In terms of biological role, required for optimal acid stress protection. Exhibits a chaperone-like activity only at low pH by suppressing non-specifically the aggregation of denaturated periplasmic proteins. In Escherichia coli O157:H7, this protein is Acid stress chaperone HdeA.